We begin with the raw amino-acid sequence, 247 residues long: tRNA (guanine-N(1)-)-methyltransferase (247 aa).

G126 contributes to the S-adenosyl-L-methionine binding site.

The protein belongs to the RNA methyltransferase TrmD family. In terms of assembly, homodimer.

Its subcellular location is the cytoplasm. The catalysed reaction is guanosine(37) in tRNA + S-adenosyl-L-methionine = N(1)-methylguanosine(37) in tRNA + S-adenosyl-L-homocysteine + H(+). Specifically methylates guanosine-37 in various tRNAs. This Jannaschia sp. (strain CCS1) protein is tRNA (guanine-N(1)-)-methyltransferase.